Reading from the N-terminus, the 388-residue chain is Succinate--CoA ligase [ADP-forming] subunit beta (388 aa).

The ATP-grasp domain occupies 9–244 (KQLFARYGMP…LSQEDERESR (236 aa)). ATP contacts are provided by residues K46, 53–55 (GRG), E99, T102, and E107. Residues N199 and D213 each contribute to the Mg(2+) site. Residues N264 and 321 to 323 (GIV) contribute to the substrate site.

The protein belongs to the succinate/malate CoA ligase beta subunit family. Heterotetramer of two alpha and two beta subunits. The cofactor is Mg(2+).

It carries out the reaction succinate + ATP + CoA = succinyl-CoA + ADP + phosphate. The catalysed reaction is GTP + succinate + CoA = succinyl-CoA + GDP + phosphate. It participates in carbohydrate metabolism; tricarboxylic acid cycle; succinate from succinyl-CoA (ligase route): step 1/1. Functionally, succinyl-CoA synthetase functions in the citric acid cycle (TCA), coupling the hydrolysis of succinyl-CoA to the synthesis of either ATP or GTP and thus represents the only step of substrate-level phosphorylation in the TCA. The beta subunit provides nucleotide specificity of the enzyme and binds the substrate succinate, while the binding sites for coenzyme A and phosphate are found in the alpha subunit. In Serratia proteamaculans (strain 568), this protein is Succinate--CoA ligase [ADP-forming] subunit beta.